Reading from the N-terminus, the 323-residue chain is tRNA U34 carboxymethyltransferase (323 aa).

Carboxy-S-adenosyl-L-methionine-binding positions include K91, W105, K110, G130, 152–154, 181–182, M196, Y200, and R315; these read DPT and IE.

It belongs to the class I-like SAM-binding methyltransferase superfamily. CmoB family. In terms of assembly, homotetramer.

It catalyses the reaction carboxy-S-adenosyl-L-methionine + 5-hydroxyuridine(34) in tRNA = 5-carboxymethoxyuridine(34) in tRNA + S-adenosyl-L-homocysteine + H(+). In terms of biological role, catalyzes carboxymethyl transfer from carboxy-S-adenosyl-L-methionine (Cx-SAM) to 5-hydroxyuridine (ho5U) to form 5-carboxymethoxyuridine (cmo5U) at position 34 in tRNAs. The sequence is that of tRNA U34 carboxymethyltransferase from Salmonella arizonae (strain ATCC BAA-731 / CDC346-86 / RSK2980).